The chain runs to 545 residues: Labda-7,13-dienyl diphosphate synthase (545 aa).

Residues 315 to 320 carry the DXDDTA motif motif; it reads DADDTA. The RXXDGSW motif signature appears at 444–450; that stretch reads RRTDGSW. The tract at residues 526–545 is disordered; it reads LPAPAPVPPGFDAARTGPAD.

This sequence belongs to the terpene synthase family. The cofactor is Mg(2+).

The enzyme catalyses (2E,6E,10E)-geranylgeranyl diphosphate = (13E)-labda-7,13-dien-15-yl diphosphate. Its function is as follows. Involved in the biosynthesis of the labdane-type bicyclic diterpene labda-7,13(16),14-triene. Catalyzes the conversion of geranylgeranyl diphosphate (GGDP) into labda-7,13(E)-dienyl diphosphate. This Streptomyces clavuligerus protein is Labda-7,13-dienyl diphosphate synthase.